The following is a 338-amino-acid chain: CRISPR-associated endonuclease Cas1 (338 aa).

Mn(2+) is bound by residues Glu165, His230, and Glu245.

The protein belongs to the CRISPR-associated endonuclease Cas1 family. As to quaternary structure, homodimer, forms a heterotetramer with a Cas2 homodimer. Mg(2+) is required as a cofactor. Mn(2+) serves as cofactor.

Its function is as follows. CRISPR (clustered regularly interspaced short palindromic repeat), is an adaptive immune system that provides protection against mobile genetic elements (viruses, transposable elements and conjugative plasmids). CRISPR clusters contain spacers, sequences complementary to antecedent mobile elements, and target invading nucleic acids. CRISPR clusters are transcribed and processed into CRISPR RNA (crRNA). Acts as a dsDNA endonuclease. Involved in the integration of spacer DNA into the CRISPR cassette. This is CRISPR-associated endonuclease Cas1 from Fusobacterium nucleatum subsp. nucleatum (strain ATCC 25586 / DSM 15643 / BCRC 10681 / CIP 101130 / JCM 8532 / KCTC 2640 / LMG 13131 / VPI 4355).